The sequence spans 449 residues: Putative gustatory receptor 77a (449 aa).

Over 1-27 the chain is Cytoplasmic; the sequence is MPLPLGDPLALAVSPQLGYIRITAMPR. The helical transmembrane segment at 28–50 threads the bilayer; the sequence is WLQLPGMSALGILYSLTRVFGLM. Residues 51–70 lie on the Extracellular side of the membrane; the sequence is ATANWSPRGIKRVRQSLYLR. Residues 71-93 traverse the membrane as a helical segment; it reads IHGCVMLIFVGCFSPFAFWCIFQ. Over 94–102 the chain is Cytoplasmic; that stretch reads RMAFLRQNR. A helical membrane pass occupies residues 103-125; sequence ILLMIGFNRYVLLLVCAFMTLWI. Over 126-205 the chain is Extracellular; it reads HCFKQAEIIG…VRRNFMYACS (80 aa). The helical transmembrane segment at 206–228 threads the bilayer; the sequence is LVFVSVCQAILQLSLGMYTMAIL. The Cytoplasmic segment spans residues 229 to 298; sequence FLGHLVRHSN…LLKLHRSICS (70 aa). A helical membrane pass occupies residues 299 to 321; that stretch reads LCAVQAVCFLGFVPLECTIHLFF. Over 322-340 the chain is Extracellular; it reads TYFMKYSKFILRKYGRSFP. Residues 341 to 363 traverse the membrane as a helical segment; the sequence is LNYFAIAFLVGLFTNLLLVILPT. At 364–420 the chain is on the cytoplasmic side; it reads YYSERRFNCTREIIKGGGLAFPSRITVKQLRHTMHFYGLYLKNVEHVFAVSACGLFK. A helical membrane pass occupies residues 421-443; sequence LNNAILFCIVGAILEYLMILIQF. The Extracellular portion of the chain corresponds to 444 to 449; the sequence is DKVLNK.

The protein belongs to the insect chemoreceptor superfamily. Gustatory receptor (GR) family. Gr77a subfamily. In terms of tissue distribution, in larvae, is expressed in dorsal pharyngeal sense organ.

The protein localises to the cell membrane. Its function is as follows. Probable gustatory receptor which mediates acceptance or avoidance behavior, depending on its substrates. The protein is Putative gustatory receptor 77a (Gr77a) of Drosophila melanogaster (Fruit fly).